The chain runs to 79 residues: Sulfur carrier protein TusA (79 aa).

The active-site Cysteine persulfide intermediate is C17.

The protein belongs to the sulfur carrier protein TusA family.

The protein localises to the cytoplasm. Its function is as follows. Sulfur carrier protein which probably makes part of a sulfur-relay system. The polypeptide is Sulfur carrier protein TusA (Actinobacillus pleuropneumoniae serotype 5b (strain L20)).